A 201-amino-acid chain; its full sequence is FMN-dependent NADH:quinone oxidoreductase (201 aa).

FMN contacts are provided by residues Ser10, 16 to 18 (SQS), 96 to 99 (MYNF), and 140 to 143 (SRGG).

This sequence belongs to the azoreductase type 1 family. Homodimer. The cofactor is FMN.

The enzyme catalyses 2 a quinone + NADH + H(+) = 2 a 1,4-benzosemiquinone + NAD(+). It catalyses the reaction N,N-dimethyl-1,4-phenylenediamine + anthranilate + 2 NAD(+) = 2-(4-dimethylaminophenyl)diazenylbenzoate + 2 NADH + 2 H(+). Functionally, quinone reductase that provides resistance to thiol-specific stress caused by electrophilic quinones. Also exhibits azoreductase activity. Catalyzes the reductive cleavage of the azo bond in aromatic azo compounds to the corresponding amines. The sequence is that of FMN-dependent NADH:quinone oxidoreductase from Escherichia coli O6:H1 (strain CFT073 / ATCC 700928 / UPEC).